The primary structure comprises 322 residues: Ribosomal RNA small subunit methyltransferase H (322 aa).

Residues 43-45 (GGY), aspartate 60, phenylalanine 86, aspartate 104, and glutamine 111 contribute to the S-adenosyl-L-methionine site.

This sequence belongs to the methyltransferase superfamily. RsmH family.

Its subcellular location is the cytoplasm. It catalyses the reaction cytidine(1402) in 16S rRNA + S-adenosyl-L-methionine = N(4)-methylcytidine(1402) in 16S rRNA + S-adenosyl-L-homocysteine + H(+). Specifically methylates the N4 position of cytidine in position 1402 (C1402) of 16S rRNA. This is Ribosomal RNA small subunit methyltransferase H from Caulobacter sp. (strain K31).